The chain runs to 510 residues: MIWHVQNENFILDSTRIFMKAFHLLLFNGSFIFPECILIFGLILLLMIDSTSDQKDTPWLYFISSTSLVMSITALLFRWREEPMISFSGNFQTNNFNEIFQFLILLCSTLCIPLSVEYIECTEMAITEFLLFVLTATLGGMFLCGANDLITIFVAPECFSLCSYLLSGYTKRDVRSNEATTKYLLMGGASSSILVYGFSWLYGSSGGEIELQEIVNGLINTQMYNSPGISIALISITVGIGFKLSPAPFHQWTPDVYEGSPTPVVAFLSVTSKVAASASATRIFDIPFYFSSNEWHLLLEILAILSMILGNLIAITQTSMKRMLAYSSIGQIGYVIIGIIVGDSNDGYASMITYMLFYISMNLGTFACIVLFGLRTGTDNIRDYAGLYTKDPFSALSSALCLLSLGGIPPLAGFFGKLYLFWCGWQAGLYFLVSIGLLTSVVSIYYYLKIIKLLMTGRNKEITPHVRNYRRSPLRSNNSIELSMIVCVIASTIPGISMNPIIAIAQDTLF.

A run of 13 helical transmembrane segments spans residues 24–44, 57–77, 99–119, 124–144, 149–169, 183–203, 229–249, 295–315, 323–343, 354–374, 395–415, 418–438, and 484–504; these read LLLF…GLIL, TPWL…ALLF, IFQF…VEYI, MAIT…MFLC, LITI…LSGY, YLLM…WLYG, ISIA…PAPF, WHLL…LIAI, MLAY…IVGD, YMLF…LFGL, ALSS…AGFF, LYLF…IGLL, and MIVC…IIAI.

Belongs to the complex I subunit 2 family. In terms of assembly, NDH is composed of at least 16 different subunits, 5 of which are encoded in the nucleus.

It localises to the plastid. Its subcellular location is the chloroplast thylakoid membrane. The catalysed reaction is a plastoquinone + NADH + (n+1) H(+)(in) = a plastoquinol + NAD(+) + n H(+)(out). It catalyses the reaction a plastoquinone + NADPH + (n+1) H(+)(in) = a plastoquinol + NADP(+) + n H(+)(out). Its function is as follows. NDH shuttles electrons from NAD(P)H:plastoquinone, via FMN and iron-sulfur (Fe-S) centers, to quinones in the photosynthetic chain and possibly in a chloroplast respiratory chain. The immediate electron acceptor for the enzyme in this species is believed to be plastoquinone. Couples the redox reaction to proton translocation, and thus conserves the redox energy in a proton gradient. This is NAD(P)H-quinone oxidoreductase subunit 2 A, chloroplastic from Nuphar advena (Common spatterdock).